Reading from the N-terminus, the 305-residue chain is 2-methoxy-6-polyprenyl-1,4-benzoquinol methylase, mitochondrial (305 aa).

A mitochondrion-targeting transit peptide spans 1-34; the sequence is MSRLRAPVAKFLADGLKGIRSTALAGSRLSNCRY. S-adenosyl-L-methionine contacts are provided by residues threonine 117, aspartate 143, and 173 to 174; that span reads NA.

Belongs to the class I-like SAM-binding methyltransferase superfamily. MenG/UbiE family. In terms of assembly, component of a multi-subunit COQ enzyme complex, composed of at least COQ3, COQ4, COQ5, COQ6, COQ7 and COQ9.

The protein localises to the mitochondrion inner membrane. It carries out the reaction 2-methoxy-6-(all-trans-decaprenyl)benzene-1,4-diol + S-adenosyl-L-methionine = 5-methoxy-2-methyl-3-(all-trans-decaprenyl)benzene-1,4-diol + S-adenosyl-L-homocysteine + H(+). It functions in the pathway cofactor biosynthesis; ubiquinone biosynthesis. Functionally, methyltransferase required for the conversion of 2-decaprenyl-6-methoxy-1,4-benzoquinol (DDMQH2) to 2-decaprenyl-3-methyl-6-methoxy-1,4-benzoquinol (DMQH2). The protein is 2-methoxy-6-polyprenyl-1,4-benzoquinol methylase, mitochondrial of Schizosaccharomyces pombe (strain 972 / ATCC 24843) (Fission yeast).